The chain runs to 118 residues: Protein MGF 110-6L (118 aa).

Positions 1–18 (MLVIFLGILGLLASQVSS) are cleaved as a signal peptide. Asparagine 96 is a glycosylation site (N-linked (GlcNAc...) asparagine; by host). The Prevents secretion from ER motif lies at 115–118 (KDEL).

This sequence belongs to the asfivirus MGF 110 family. Post-translationally, N-glycosylated.

Its subcellular location is the host endoplasmic reticulum lumen. Plays a role in virus cell tropism, and may be required for efficient virus replication in macrophages. The chain is Protein MGF 110-6L from African swine fever virus (isolate Tick/South Africa/Pretoriuskop Pr4/1996) (ASFV).